The following is a 200-amino-acid chain: Inner membrane-spanning protein YciB (200 aa).

6 consecutive transmembrane segments (helical) span residues 1–21 (MPPL…FFAN), 37–57 (IGAP…IALA), 66–86 (LAIM…LTLW), 103–123 (LFGG…GYVF), 136–156 (KLTL…EIVW), and 167–187 (FKVW…MPLI).

Belongs to the YciB family.

The protein localises to the cell inner membrane. Functionally, plays a role in cell envelope biogenesis, maintenance of cell envelope integrity and membrane homeostasis. In Brucella melitensis biotype 1 (strain ATCC 23456 / CCUG 17765 / NCTC 10094 / 16M), this protein is Inner membrane-spanning protein YciB.